The chain runs to 483 residues: Chromosomal replication initiator protein DnaA (483 aa).

A domain I, interacts with DnaA modulators region spans residues 1 to 71 (MKEFWQTCVS…EALAAEWYQR (71 aa)). The tract at residues 71–145 (RPVQVQFELP…DAANIVYERS (75 aa)) is domain II. A domain III, AAA+ region region spans residues 146–362 (RLNTDLTFEN…GALRKVLAYA (217 aa)). 4 residues coordinate ATP: G190, G192, K193, and T194. Residues 363-483 (RFHGREALNV…LHVLEQTLKG (121 aa)) are domain IV, binds dsDNA.

Belongs to the DnaA family. In terms of assembly, oligomerizes as a right-handed, spiral filament on DNA at oriC.

The protein resides in the cytoplasm. In terms of biological role, plays an essential role in the initiation and regulation of chromosomal replication. ATP-DnaA binds to the origin of replication (oriC) to initiate formation of the DNA replication initiation complex once per cell cycle. Binds the DnaA box (a 9 base pair repeat at the origin) and separates the double-stranded (ds)DNA. Forms a right-handed helical filament on oriC DNA; dsDNA binds to the exterior of the filament while single-stranded (ss)DNA is stabiized in the filament's interior. The ATP-DnaA-oriC complex binds and stabilizes one strand of the AT-rich DNA unwinding element (DUE), permitting loading of DNA polymerase. After initiation quickly degrades to an ADP-DnaA complex that is not apt for DNA replication. Binds acidic phospholipids. In Bordetella avium (strain 197N), this protein is Chromosomal replication initiator protein DnaA.